A 413-amino-acid chain; its full sequence is Serine/threonine transporter SstT (413 aa).

9 consecutive transmembrane segments (helical) span residues 14–34 (GSLV…ASFS), 44–64 (LGTL…FILV), 82–102 (IVLL…VVSF), 141–161 (ALAS…GVAL), 178–198 (GVTF…FGLV), 217–237 (LMVL…LIVF), 290–310 (IPLG…VLTL), 330–350 (LVAA…LLLI), and 356–376 (LFGI…IIGV).

Belongs to the dicarboxylate/amino acid:cation symporter (DAACS) (TC 2.A.23) family.

Its subcellular location is the cell inner membrane. The enzyme catalyses L-serine(in) + Na(+)(in) = L-serine(out) + Na(+)(out). It carries out the reaction L-threonine(in) + Na(+)(in) = L-threonine(out) + Na(+)(out). Functionally, involved in the import of serine and threonine into the cell, with the concomitant import of sodium (symport system). The sequence is that of Serine/threonine transporter SstT from Edwardsiella ictaluri (strain 93-146).